The following is a 100-amino-acid chain: Urease subunit gamma (100 aa).

The protein belongs to the urease gamma subunit family. As to quaternary structure, heterotrimer of UreA (gamma), UreB (beta) and UreC (alpha) subunits. Three heterotrimers associate to form the active enzyme.

Its subcellular location is the cytoplasm. The catalysed reaction is urea + 2 H2O + H(+) = hydrogencarbonate + 2 NH4(+). It participates in nitrogen metabolism; urea degradation; CO(2) and NH(3) from urea (urease route): step 1/1. This Mycobacterium ulcerans (strain Agy99) protein is Urease subunit gamma.